The following is a 239-amino-acid chain: Orotidine 5'-phosphate decarboxylase (239 aa).

Substrate-binding positions include aspartate 11, lysine 33, 60–69 (DLKLHDIPTT), threonine 123, arginine 185, glutamine 194, glycine 214, and arginine 215. The active-site Proton donor is lysine 62.

It belongs to the OMP decarboxylase family. Type 1 subfamily. Homodimer.

It carries out the reaction orotidine 5'-phosphate + H(+) = UMP + CO2. It participates in pyrimidine metabolism; UMP biosynthesis via de novo pathway; UMP from orotate: step 2/2. Its function is as follows. Catalyzes the decarboxylation of orotidine 5'-monophosphate (OMP) to uridine 5'-monophosphate (UMP). This is Orotidine 5'-phosphate decarboxylase (pyrF) from Bacillus subtilis (strain 168).